We begin with the raw amino-acid sequence, 105 residues long: Small ribosomal subunit protein uS10 (105 aa).

It belongs to the universal ribosomal protein uS10 family. Part of the 30S ribosomal subunit.

Functionally, involved in the binding of tRNA to the ribosomes. This Anaplasma marginale (strain Florida) protein is Small ribosomal subunit protein uS10.